A 48-amino-acid polypeptide reads, in one-letter code: ATP synthase protein 8 (48 aa).

The residue at position 1 (M1) is an N-formylmethionine. Residues 1-12 lie on the Mitochondrial intermembrane side of the membrane; the sequence is MPQLVPFYFTNQ. Residues 13–32 traverse the membrane as a helical segment; sequence IFYGFASLSVIVYLFSIYIL. Topologically, residues 33–48 are mitochondrial matrix; sequence PHYLEIYVTRIFITKT.

As to quaternary structure, F-type ATP synthases have 2 components, the catalytic core F(1) and the membrane-embedded component F(0), linked together by a central stalk and a peripheral stalk. The central stalk, also called rotor shaft, is often seen as part of F(1). The peripheral stalk is seen as part of F(0). F(0) contains the membrane channel next to the rotor. F-type ATP synthases form dimers but each monomer functions independently in ATP generation. The dimer consists of 17 different polypeptides: ATP1 (subunit alpha, 3 molecules per monomer, part of F(1)), ATP2 (subunit beta, 3 copies per monomer, part of F(1)), ATP3 (subunit gamma, part of the central stalk), ATP4 (subunit b, part of the peripheral stalk), ATP5/OSCP (subunit 5/OSCP, part of the peripheral stalk), ATP6 (subunit a, part of the peripheral stalk), ATP7 (subunit d, part of the peripheral stalk), ATP8 (subunit 8, part of the peripheral stalk), OLI1 (subunit c, part of the rotor, 10 molecules per monomer), ATP14 (subunit h, part of the peripheral stalk), ATP15 (subunit epsilon, part of the central stalk), ATP16 (subunit delta, part of the central stalk), ATP17 (subunit f, part of the peripheral stalk), ATP18 (subunit i/j, part of the peripheral stalk), ATP19 (subunit k, dimer-specific, at interface between monomers), ATP20 (subunit g, at interface between monomers), TIM11 (subunit e, at interface between monomers).

The protein localises to the mitochondrion inner membrane. Functionally, mitochondrial membrane ATP synthase (F(1)F(0) ATP synthase or Complex V) produces ATP from ADP in the presence of a proton gradient across the membrane which is generated by electron transport complexes of the respiratory chain. F-type ATP synthases consist of two structural domains, F(1) - containing the extramembraneous catalytic core, and F(0) - containing the membrane proton channel, linked together by a central stalk and a peripheral stalk. During catalysis, ATP synthesis in the catalytic domain of F(1) is coupled via a rotary mechanism of the central stalk subunits to proton translocation. Part of the complex F(0) domain. Minor subunit located with subunit a/ATP6 in the membrane. This is ATP synthase protein 8 from Yarrowia lipolytica (strain CLIB 122 / E 150) (Yeast).